Here is a 329-residue protein sequence, read N- to C-terminus: Ribosomal RNA small subunit methyltransferase H (329 aa).

S-adenosyl-L-methionine-binding positions include 46–48 (GGH), D65, F92, D113, and H120. The disordered stretch occupies residues 295 to 329 (RGAERPSPAEVAANPRAASARLRAAEKIRDTREAA). The segment covering 317–329 (RAAEKIRDTREAA) has biased composition (basic and acidic residues).

This sequence belongs to the methyltransferase superfamily. RsmH family.

It localises to the cytoplasm. The enzyme catalyses cytidine(1402) in 16S rRNA + S-adenosyl-L-methionine = N(4)-methylcytidine(1402) in 16S rRNA + S-adenosyl-L-homocysteine + H(+). Specifically methylates the N4 position of cytidine in position 1402 (C1402) of 16S rRNA. In Acidothermus cellulolyticus (strain ATCC 43068 / DSM 8971 / 11B), this protein is Ribosomal RNA small subunit methyltransferase H.